A 436-amino-acid polypeptide reads, in one-letter code: GTPase Obg (436 aa).

In terms of domain architecture, Obg spans 2 to 160; that stretch reads SMFLDTAKIK…RELQLELKIL (159 aa). Positions 161 to 338 constitute an OBG-type G domain; the sequence is ADVGLVGFPS…LLDATAELLD (178 aa). Residues 167-174, 192-196, 214-217, 284-287, and 319-321 each bind GTP; these read GFPSVGKS, FTTIV, DLPG, NKMD, and SGL. S174 and T194 together coordinate Mg(2+). In terms of domain architecture, OCT spans 358 to 436; sequence GFDEEEKAFE…IGKFEFEFVD (79 aa).

It belongs to the TRAFAC class OBG-HflX-like GTPase superfamily. OBG GTPase family. As to quaternary structure, monomer. It depends on Mg(2+) as a cofactor.

The protein localises to the cytoplasm. Its function is as follows. An essential GTPase which binds GTP, GDP and possibly (p)ppGpp with moderate affinity, with high nucleotide exchange rates and a fairly low GTP hydrolysis rate. Plays a role in control of the cell cycle, stress response, ribosome biogenesis and in those bacteria that undergo differentiation, in morphogenesis control. This Streptococcus pneumoniae (strain CGSP14) protein is GTPase Obg.